Consider the following 460-residue polypeptide: Bifunctional protein GlmU (460 aa).

The interval 1–233 (MLDIVIMAAG…ETEVLGVNSP (233 aa)) is pyrophosphorylase. UDP-N-acetyl-alpha-D-glucosamine-binding positions include K21, Q76, and 81–82 (GT). D105 is a Mg(2+) binding site. G140, E158, and N231 together coordinate UDP-N-acetyl-alpha-D-glucosamine. Residue N231 coordinates Mg(2+). Positions 234-254 (LQLADLERRLQRKQAEALLEA) are linker. Residues 255 to 460 (GVRLADPARF…AGWQRPQKKR (206 aa)) form an N-acetyltransferase region. Residues R337 and K355 each contribute to the UDP-N-acetyl-alpha-D-glucosamine site. Catalysis depends on H367, which acts as the Proton acceptor. UDP-N-acetyl-alpha-D-glucosamine-binding residues include Y370 and N381. Acetyl-CoA contacts are provided by residues A384, 390–391 (NY), S409, G427, and R444.

In the N-terminal section; belongs to the N-acetylglucosamine-1-phosphate uridyltransferase family. It in the C-terminal section; belongs to the transferase hexapeptide repeat family. Homotrimer. The cofactor is Mg(2+).

It is found in the cytoplasm. The catalysed reaction is alpha-D-glucosamine 1-phosphate + acetyl-CoA = N-acetyl-alpha-D-glucosamine 1-phosphate + CoA + H(+). It catalyses the reaction N-acetyl-alpha-D-glucosamine 1-phosphate + UTP + H(+) = UDP-N-acetyl-alpha-D-glucosamine + diphosphate. The protein operates within nucleotide-sugar biosynthesis; UDP-N-acetyl-alpha-D-glucosamine biosynthesis; N-acetyl-alpha-D-glucosamine 1-phosphate from alpha-D-glucosamine 6-phosphate (route II): step 2/2. Its pathway is nucleotide-sugar biosynthesis; UDP-N-acetyl-alpha-D-glucosamine biosynthesis; UDP-N-acetyl-alpha-D-glucosamine from N-acetyl-alpha-D-glucosamine 1-phosphate: step 1/1. It participates in bacterial outer membrane biogenesis; LPS lipid A biosynthesis. In terms of biological role, catalyzes the last two sequential reactions in the de novo biosynthetic pathway for UDP-N-acetylglucosamine (UDP-GlcNAc). The C-terminal domain catalyzes the transfer of acetyl group from acetyl coenzyme A to glucosamine-1-phosphate (GlcN-1-P) to produce N-acetylglucosamine-1-phosphate (GlcNAc-1-P), which is converted into UDP-GlcNAc by the transfer of uridine 5-monophosphate (from uridine 5-triphosphate), a reaction catalyzed by the N-terminal domain. This Methylibium petroleiphilum (strain ATCC BAA-1232 / LMG 22953 / PM1) protein is Bifunctional protein GlmU.